Here is a 262-residue protein sequence, read N- to C-terminus: Putative hydro-lyase Mflv_5194 (262 aa).

The protein belongs to the D-glutamate cyclase family.

The protein is Putative hydro-lyase Mflv_5194 of Mycolicibacterium gilvum (strain PYR-GCK) (Mycobacterium gilvum (strain PYR-GCK)).